The sequence spans 617 residues: V-type proton ATPase catalytic subunit A (617 aa).

A Phosphothreonine modification is found at threonine 136. 250 to 257 lines the ATP pocket; it reads GAFGCGKT. Residue serine 384 is modified to Phosphoserine; by AMPK.

It belongs to the ATPase alpha/beta chains family. As to quaternary structure, V-ATPase is a heteromultimeric enzyme made up of two complexes: the ATP-hydrolytic V1 complex and the proton translocation V0 complex. The V1 complex consists of three catalytic AB heterodimers that form a heterohexamer, three peripheral stalks each consisting of EG heterodimers, one central rotor including subunits D and F, and the regulatory subunits C and H. The proton translocation complex V0 consists of the proton transport subunit a, a ring of proteolipid subunits c9c'', rotary subunit d, subunits e and f, and the accessory subunits ATP6AP1/Ac45 and ATP6AP2/PRR. Interacts with the V0 complex V-ATPase subunit a4 ATP6V0A4. Interacts with WFS1. Interacts with alpha-crystallin B chain/CRYAB and with MTOR, forming a ternary complex. In terms of processing, phosphorylation at Ser-384 by AMPK down-regulates its enzyme activity.

Its subcellular location is the cytoplasm. It is found in the cytosol. The protein localises to the cytoplasmic vesicle. It localises to the secretory vesicle. The protein resides in the clathrin-coated vesicle membrane. Its subcellular location is the lysosome. It carries out the reaction ATP + H2O + 4 H(+)(in) = ADP + phosphate + 5 H(+)(out). ATP hydrolysis occurs at the interface between the nucleotide-binding domains of subunits A and B. ATP hydrolysis triggers a conformational change in the subunits D and F, which induces a shift of subunit d. The c-ring is subsequently rotated and results in a continuous proton translocation across the membrane. Functionally, catalytic subunit of the V1 complex of vacuolar(H+)-ATPase (V-ATPase), a multisubunit enzyme composed of a peripheral complex (V1) that hydrolyzes ATP and a membrane integral complex (V0) that translocates protons. V-ATPase is responsible for acidifying and maintaining the pH of intracellular compartments and in some cell types, is targeted to the plasma membrane, where it is responsible for acidifying the extracellular environment. In aerobic conditions, involved in intracellular iron homeostasis, thus triggering the activity of Fe(2+) prolyl hydroxylase (PHD) enzymes, and leading to HIF1A hydroxylation and subsequent proteasomal degradation. May play a role in neurite development and synaptic connectivity. This Sus scrofa (Pig) protein is V-type proton ATPase catalytic subunit A (ATP6V1A).